The primary structure comprises 269 residues: RBPJ-interacting and tubulin-associated protein 1 (269 aa).

Positions 5 to 17 match the Nuclear export signal motif; sequence VELAISGMQTLHV. Disordered stretches follow at residues 67–94 and 145–269; these read GTGV…TLTP and PATP…PPWK. Positions 79–93 are enriched in low complexity; the sequence is SCESTSSSGSTPTLT. Residues 92–108 carry the Nuclear localization signal motif; the sequence is LTPRKKNKYRLISHTPS. The interaction with RBPJ/RBPSUH stretch occupies residues 128–156; it reads WMARGDAAKLHALFWTPPATPRGSHSPRP. Residues 156–269 are interaction with tubulin; sequence PRETPVRCVH…ATQKTKPPWK (114 aa). 2 stretches are compositionally biased toward polar residues: residues 202–220 and 247–269; these read LTHP…SPCT and VSVS…PPWK.

Belongs to the RITA family. In terms of assembly, interacts with RBPJ/RBPSUH.

It localises to the cytoplasm. The protein resides in the nucleus. Its subcellular location is the cytoskeleton. It is found in the microtubule organizing center. The protein localises to the centrosome. Tubulin-binding protein that acts as a negative regulator of Notch signaling pathway. Shuttles between the cytoplasm and the nucleus and mediates the nuclear export of RBPJ/RBPSUH, thereby preventing the interaction between RBPJ/RBPSUH and NICD product of Notch proteins (Notch intracellular domain), leading to down-regulate Notch-mediated transcription. May play a role in neurogenesis. This chain is RBPJ-interacting and tubulin-associated protein 1 (RITA1), found in Bos taurus (Bovine).